The chain runs to 459 residues: Bifunctional protein GlmU (459 aa).

The pyrophosphorylase stretch occupies residues 1 to 229 (MSNFAIILAA…FDESLGVNDR (229 aa)). UDP-N-acetyl-alpha-D-glucosamine is bound by residues 8–11 (LAAG), Lys-22, Gln-72, and 77–78 (GT). Asp-102 serves as a coordination point for Mg(2+). Positions 139, 154, 169, and 227 each coordinate UDP-N-acetyl-alpha-D-glucosamine. Mg(2+) is bound at residue Asn-227. The segment at 230-250 (VALATAESVMRRRINHKHMVN) is linker. Residues 251-459 (GVSFVNPEAT…TRLPHHPKNQ (209 aa)) are N-acetyltransferase. 2 residues coordinate UDP-N-acetyl-alpha-D-glucosamine: Arg-332 and Lys-350. His-362 serves as the catalytic Proton acceptor. Residues Tyr-365 and Asn-376 each contribute to the UDP-N-acetyl-alpha-D-glucosamine site. Residues Ala-379, 385–386 (NY), Ser-404, Ala-422, and Arg-439 each bind acetyl-CoA.

This sequence in the N-terminal section; belongs to the N-acetylglucosamine-1-phosphate uridyltransferase family. The protein in the C-terminal section; belongs to the transferase hexapeptide repeat family. In terms of assembly, homotrimer. The cofactor is Mg(2+).

It is found in the cytoplasm. It carries out the reaction alpha-D-glucosamine 1-phosphate + acetyl-CoA = N-acetyl-alpha-D-glucosamine 1-phosphate + CoA + H(+). The enzyme catalyses N-acetyl-alpha-D-glucosamine 1-phosphate + UTP + H(+) = UDP-N-acetyl-alpha-D-glucosamine + diphosphate. The protein operates within nucleotide-sugar biosynthesis; UDP-N-acetyl-alpha-D-glucosamine biosynthesis; N-acetyl-alpha-D-glucosamine 1-phosphate from alpha-D-glucosamine 6-phosphate (route II): step 2/2. It functions in the pathway nucleotide-sugar biosynthesis; UDP-N-acetyl-alpha-D-glucosamine biosynthesis; UDP-N-acetyl-alpha-D-glucosamine from N-acetyl-alpha-D-glucosamine 1-phosphate: step 1/1. It participates in bacterial outer membrane biogenesis; LPS lipid A biosynthesis. In terms of biological role, catalyzes the last two sequential reactions in the de novo biosynthetic pathway for UDP-N-acetylglucosamine (UDP-GlcNAc). The C-terminal domain catalyzes the transfer of acetyl group from acetyl coenzyme A to glucosamine-1-phosphate (GlcN-1-P) to produce N-acetylglucosamine-1-phosphate (GlcNAc-1-P), which is converted into UDP-GlcNAc by the transfer of uridine 5-monophosphate (from uridine 5-triphosphate), a reaction catalyzed by the N-terminal domain. This Streptococcus pneumoniae (strain Hungary19A-6) protein is Bifunctional protein GlmU.